We begin with the raw amino-acid sequence, 270 residues long: 3-methyl-2-oxobutanoate hydroxymethyltransferase (270 aa).

2 residues coordinate Mg(2+): D48 and D87. Residues 48 to 49 (DS), D87, and K117 contribute to the 3-methyl-2-oxobutanoate site. E119 contributes to the Mg(2+) binding site. Catalysis depends on E186, which acts as the Proton acceptor.

It belongs to the PanB family. As to quaternary structure, homodecamer; pentamer of dimers. The cofactor is Mg(2+).

The protein localises to the cytoplasm. It carries out the reaction 3-methyl-2-oxobutanoate + (6R)-5,10-methylene-5,6,7,8-tetrahydrofolate + H2O = 2-dehydropantoate + (6S)-5,6,7,8-tetrahydrofolate. Its pathway is cofactor biosynthesis; (R)-pantothenate biosynthesis; (R)-pantoate from 3-methyl-2-oxobutanoate: step 1/2. In terms of biological role, catalyzes the reversible reaction in which hydroxymethyl group from 5,10-methylenetetrahydrofolate is transferred onto alpha-ketoisovalerate to form ketopantoate. The protein is 3-methyl-2-oxobutanoate hydroxymethyltransferase of Synechococcus sp. (strain RCC307).